A 649-amino-acid polypeptide reads, in one-letter code: Ubiquitin-associated and SH3 domain-containing protein B (649 aa).

At Ser-20 the chain carries Phosphoserine. Residue Thr-23 is modified to Phosphothreonine. The 50-residue stretch at 27–76 folds into the UBA domain; sequence NRQQRPGTIKHGSALDVLLSMGFPRARAQKALASTGGRSVQAACDWLFSH. An SH3 domain is found at 254 to 319; that stretch reads ANHETLQVIY…PENYITKADE (66 aa). The segment at 380 to 649 is protein tyrosine phosphatase; it reads GPQKRCLFVC…FNWRETLLQE (270 aa). Arg-390 is a catalytic residue. Residue His-391 is the Tele-phosphohistidine intermediate of the active site. Residue His-576 is part of the active site.

Homodimer. Interacts with JAK2 (in vitro). Interacts with CBL. Part of a complex containing CBL and activated EGFR. Interacts with ubiquitin and with mono-ubiquitinated proteins. Interacts with ZAP70 (ubiquitinated form).

The protein localises to the cytoplasm. The protein resides in the nucleus. The catalysed reaction is O-phospho-L-tyrosyl-[protein] + H2O = L-tyrosyl-[protein] + phosphate. Its function is as follows. Interferes with CBL-mediated down-regulation and degradation of receptor-type tyrosine kinases. Promotes accumulation of activated target receptors, such as T-cell receptors and EGFR, on the cell surface. Exhibits tyrosine phosphatase activity toward several substrates including EGFR, FAK, SYK, and ZAP70. Down-regulates proteins that are dually modified by both protein tyrosine phosphorylation and ubiquitination. In Homo sapiens (Human), this protein is Ubiquitin-associated and SH3 domain-containing protein B (UBASH3B).